Here is a 164-residue protein sequence, read N- to C-terminus: CASP-like protein 1C2 (164 aa).

At Met1–Val8 the chain is on the cytoplasmic side. The helical transmembrane segment at Phe9–Ile29 threads the bilayer. Topologically, residues Arg30–Lys53 are extracellular. N-linked (GlcNAc...) asparagine glycosylation is present at Asn39. A helical membrane pass occupies residues Tyr54–Ser74. Topologically, residues Lys75–Arg80 are cytoplasmic. A helical transmembrane segment spans residues Leu81–Leu101. The Extracellular segment spans residues Ala102–Gln129. Residues Ala130 to Cys150 form a helical membrane-spanning segment. Residues Ser151–Pro164 lie on the Cytoplasmic side of the membrane.

Belongs to the Casparian strip membrane proteins (CASP) family. Homodimer and heterodimers.

The protein localises to the cell membrane. The chain is CASP-like protein 1C2 from Ricinus communis (Castor bean).